Consider the following 483-residue polypeptide: Aspartyl/glutamyl-tRNA(Asn/Gln) amidotransferase subunit B (483 aa).

The protein belongs to the GatB/GatE family. GatB subfamily. As to quaternary structure, heterotrimer of A, B and C subunits.

It carries out the reaction L-glutamyl-tRNA(Gln) + L-glutamine + ATP + H2O = L-glutaminyl-tRNA(Gln) + L-glutamate + ADP + phosphate + H(+). It catalyses the reaction L-aspartyl-tRNA(Asn) + L-glutamine + ATP + H2O = L-asparaginyl-tRNA(Asn) + L-glutamate + ADP + phosphate + 2 H(+). Allows the formation of correctly charged Asn-tRNA(Asn) or Gln-tRNA(Gln) through the transamidation of misacylated Asp-tRNA(Asn) or Glu-tRNA(Gln) in organisms which lack either or both of asparaginyl-tRNA or glutaminyl-tRNA synthetases. The reaction takes place in the presence of glutamine and ATP through an activated phospho-Asp-tRNA(Asn) or phospho-Glu-tRNA(Gln). The polypeptide is Aspartyl/glutamyl-tRNA(Asn/Gln) amidotransferase subunit B (Marinobacter nauticus (strain ATCC 700491 / DSM 11845 / VT8) (Marinobacter aquaeolei)).